Reading from the N-terminus, the 451-residue chain is Adenylyltransferase and sulfurtransferase MOCS3 (451 aa).

The interval 42-62 is disordered; sequence GEDSDEAEESSNDMPTPQTKL. The segment covering 43–52 has biased composition (acidic residues); the sequence is EDSDEAEESS. Position 60 is a phosphothreonine (threonine 60). ATP-binding positions include glycine 99, aspartate 120, 127–131, lysine 144, and 188–189; these read SNLHR and DN. The Zn(2+) site is built by cysteine 229 and cysteine 232. Cysteine 246 acts as the Glycyl thioester intermediate; for adenylyltransferase activity in catalysis. Residues cysteine 304 and cysteine 307 each coordinate Zn(2+). One can recognise a Rhodanese domain in the interval 353-449; the sequence is QSQPHLLLDV…WTGSVDATFP (97 aa). The active-site Cysteine persulfide intermediate; for sulfurtransferase activity is cysteine 408.

It in the N-terminal section; belongs to the HesA/MoeB/ThiF family. UBA4 subfamily. Requires Zn(2+) as cofactor.

It localises to the cytoplasm. The protein localises to the cytosol. The enzyme catalyses [molybdopterin-synthase sulfur-carrier protein]-C-terminal Gly-Gly + ATP + H(+) = [molybdopterin-synthase sulfur-carrier protein]-C-terminal Gly-Gly-AMP + diphosphate. It catalyses the reaction [molybdopterin-synthase sulfur-carrier protein]-C-terminal Gly-Gly-AMP + S-sulfanyl-L-cysteinyl-[cysteine desulfurase] + AH2 = [molybdopterin-synthase sulfur-carrier protein]-C-terminal-Gly-aminoethanethioate + L-cysteinyl-[cysteine desulfurase] + A + AMP + 2 H(+). The protein operates within tRNA modification; 5-methoxycarbonylmethyl-2-thiouridine-tRNA biosynthesis. Its pathway is cofactor biosynthesis; molybdopterin biosynthesis. Its function is as follows. Plays a central role in 2-thiolation of mcm(5)S(2)U at tRNA wobble positions of cytosolic tRNA(Lys), tRNA(Glu) and tRNA(Gln). Also essential during biosynthesis of the molybdenum cofactor. Acts by mediating the C-terminal thiocarboxylation of sulfur carriers URM1 and MOCS2A. Its N-terminus first activates URM1 and MOCS2A as acyl-adenylates (-COAMP), then the persulfide sulfur on the catalytic cysteine is transferred to URM1 and MOCS2A to form thiocarboxylation (-COSH) of their C-terminus. The reaction probably involves hydrogen sulfide that is generated from the persulfide intermediate and that acts as a nucleophile towards URM1 and MOCS2A. Subsequently, a transient disulfide bond is formed. Does not use thiosulfate as sulfur donor; NFS1 probably acting as a sulfur donor for thiocarboxylation reactions. This chain is Adenylyltransferase and sulfurtransferase MOCS3, found in Drosophila persimilis (Fruit fly).